Consider the following 678-residue polypeptide: Ribosome biogenesis protein BOP1 homolog (678 aa).

Basic and acidic residues predominate over residues 1-10 (MGHSDGDHGS). The tract at residues 1-73 (MGHSDGDHGS…VAPRNTIGDV (73 aa)) is disordered. Residues 24–63 (WSDDDDEGSLSFEDSGEGSDAESDEPDAPAVEESDSSEDE) are compositionally biased toward acidic residues. WD repeat units follow at residues 343–384 (GHNG…KVWN), 386–424 (GGVV…EDAQ), 463–505 (IHHK…SHHP), 508–548 (KLPG…KKLE), 549–588 (SGVR…RPYK), 592–631 (NHSK…DLNQ), and 647–678 (SDGR…LYCD).

Belongs to the WD repeat BOP1/ERB1 family.

The protein resides in the nucleus. Its subcellular location is the nucleolus. It localises to the nucleoplasm. In terms of biological role, required for maturation of ribosomal RNAs and formation of the large ribosomal subunit. The chain is Ribosome biogenesis protein BOP1 homolog from Oryza sativa subsp. japonica (Rice).